The chain runs to 138 residues: Large ribosomal subunit protein uL16 (138 aa).

A compositionally biased stretch (basic residues) spans methionine 1–glutamine 13. Residues methionine 1–leucine 20 are disordered.

Belongs to the universal ribosomal protein uL16 family. In terms of assembly, part of the 50S ribosomal subunit.

Binds 23S rRNA and is also seen to make contacts with the A and possibly P site tRNAs. This is Large ribosomal subunit protein uL16 from Bordetella avium (strain 197N).